A 413-amino-acid chain; its full sequence is MSDFIFTSESVTEGHPDKICDQISDAVLDALLTEDPESRVACETVVNTGLCLLTGEITSKAKVDYIKLVRNVIKEIGYEGYRAGGFDANSCAVLVALDEQSPDISQGVNDADDINDDLEDNTGAGDQGIMFGYACDETPELMPLPISLAHRLAIQLAKVRHEEVLNYLLPDGKTQVSIDYEKGLPVSINTILISTQHNSEIDGVTNEEEIRQRIKEDLWKNVVIPATEDLEIKPNISKTRFLVNPTGKFVVGGPQGDAGLTGRKIIVDTYGGYARHGGGAFSGKDPTKVDRSAAYAARYVAKSIVKAKLAKKAEVQLSYAIGVAKPISILVETFDTGVISQNNLTELIKEHFDLRPAAIIKEFNLRNLPKKMGGKFFRKTASYGHFGRRDLELPWENVEEKAAKLAEASKIFL.

His15 is an ATP binding site. Asp17 is a binding site for Mg(2+). Glu43 is a binding site for K(+). The L-methionine site is built by Glu56 and Gln100. A flexible loop region spans residues 100-110 (QSPDISQGVND). Residues 171 to 173 (DGK), 248 to 249 (KF), Asp257, 263 to 264 (RK), Ala280, and Lys284 each bind ATP. Position 257 (Asp257) interacts with L-methionine. Lys288 is an L-methionine binding site.

Belongs to the AdoMet synthase family. As to quaternary structure, homotetramer; dimer of dimers. Requires Mg(2+) as cofactor. The cofactor is K(+).

It is found in the cytoplasm. The catalysed reaction is L-methionine + ATP + H2O = S-adenosyl-L-methionine + phosphate + diphosphate. It functions in the pathway amino-acid biosynthesis; S-adenosyl-L-methionine biosynthesis; S-adenosyl-L-methionine from L-methionine: step 1/1. Functionally, catalyzes the formation of S-adenosylmethionine (AdoMet) from methionine and ATP. The overall synthetic reaction is composed of two sequential steps, AdoMet formation and the subsequent tripolyphosphate hydrolysis which occurs prior to release of AdoMet from the enzyme. This is S-adenosylmethionine synthase from Prochlorococcus marinus (strain MIT 9301).